The following is a 40-amino-acid chain: Photosystem II reaction center protein J (40 aa).

Residues 8–28 (IPLWLIGTVVGTPVISLVGIF) form a helical membrane-spanning segment.

It belongs to the PsbJ family. PSII is composed of 1 copy each of membrane proteins PsbA, PsbB, PsbC, PsbD, PsbE, PsbF, PsbH, PsbI, PsbJ, PsbK, PsbL, PsbM, PsbT, PsbX, PsbY, PsbZ, Psb30/Ycf12, at least 3 peripheral proteins of the oxygen-evolving complex and a large number of cofactors. It forms dimeric complexes.

It localises to the plastid. The protein localises to the chloroplast thylakoid membrane. Functionally, one of the components of the core complex of photosystem II (PSII). PSII is a light-driven water:plastoquinone oxidoreductase that uses light energy to abstract electrons from H(2)O, generating O(2) and a proton gradient subsequently used for ATP formation. It consists of a core antenna complex that captures photons, and an electron transfer chain that converts photonic excitation into a charge separation. The sequence is that of Photosystem II reaction center protein J from Huperzia lucidula (Shining clubmoss).